We begin with the raw amino-acid sequence, 85 residues long: MGLKLHIHWFDKKTEEFKGGEYSKDFGDDGSVIESLGMPLKDNINNGWFDVEKPWVSILQPHFKNVIDISKFDYFVSFVYRDGNW.

The residue at position 12 (Lys12) is an N6-methyllysine.

This sequence belongs to the cloacin immunity protein family.

Functionally, this protein complexes with cloacin protein in equimolar amounts and inhibits it by binding with high affinity to the C-terminal catalytic domain of cloacin. In Escherichia coli, this protein is Cloacin immunity protein (cim).